Reading from the N-terminus, the 474-residue chain is uncharacterized protein (474 aa).

The helical transmembrane segment at 374–398 threads the bilayer; that stretch reads GLICYLALFSISLMIENIIGLTISL.

Its subcellular location is the membrane. This is an uncharacterized protein from Borreliella burgdorferi (strain ATCC 35210 / DSM 4680 / CIP 102532 / B31) (Borrelia burgdorferi).